Consider the following 196-residue polypeptide: Peptidyl-tRNA hydrolase (196 aa).

TRNA is bound at residue tyrosine 18. Catalysis depends on histidine 23, which acts as the Proton acceptor. 3 residues coordinate tRNA: phenylalanine 69, asparagine 71, and asparagine 117.

The protein belongs to the PTH family. Monomer.

Its subcellular location is the cytoplasm. The enzyme catalyses an N-acyl-L-alpha-aminoacyl-tRNA + H2O = an N-acyl-L-amino acid + a tRNA + H(+). Hydrolyzes ribosome-free peptidyl-tRNAs (with 1 or more amino acids incorporated), which drop off the ribosome during protein synthesis, or as a result of ribosome stalling. Functionally, catalyzes the release of premature peptidyl moieties from peptidyl-tRNA molecules trapped in stalled 50S ribosomal subunits, and thus maintains levels of free tRNAs and 50S ribosomes. The chain is Peptidyl-tRNA hydrolase from Aliivibrio fischeri (strain MJ11) (Vibrio fischeri).